Consider the following 229-residue polypeptide: Uracil-DNA glycosylase (229 aa).

D64 acts as the Proton acceptor in catalysis.

Belongs to the uracil-DNA glycosylase (UDG) superfamily. UNG family.

The protein resides in the cytoplasm. The enzyme catalyses Hydrolyzes single-stranded DNA or mismatched double-stranded DNA and polynucleotides, releasing free uracil.. Excises uracil residues from the DNA which can arise as a result of misincorporation of dUMP residues by DNA polymerase or due to deamination of cytosine. The chain is Uracil-DNA glycosylase from Geobacillus kaustophilus (strain HTA426).